The sequence spans 500 residues: Betaine aldehyde dehydrogenase, chloroplastic (500 aa).

A chloroplast-targeting transit peptide spans 1 to 7 (MSMPIPS). NAD(+) is bound at residue 238 to 243 (GSSATG). The active-site Proton acceptor is the Glu-260. The active-site Nucleophile is Cys-294.

This sequence belongs to the aldehyde dehydrogenase family. In terms of assembly, homodimer.

Its subcellular location is the plastid. It localises to the chloroplast. The catalysed reaction is betaine aldehyde + NAD(+) + H2O = glycine betaine + NADH + 2 H(+). Its pathway is amine and polyamine biosynthesis; betaine biosynthesis via choline pathway; betaine from betaine aldehyde: step 1/1. The sequence is that of Betaine aldehyde dehydrogenase, chloroplastic from Beta vulgaris (Sugar beet).